The chain runs to 112 residues: CLAVATA3/ESR (CLE)-related protein 44 (112 aa).

An N-terminal signal peptide occupies residues 1–39; the sequence is MATTIDQTSIKSLHFHQVIRLIITIIFLAFLFLIGPTSS. A disordered region spans residues 41–112; it reads NHHLHESSSK…VPSGPNPISN (72 aa). Positions 62 to 71 are enriched in polar residues; sequence QPSTPSSSTM. Pro-104 and Pro-107 each carry hydroxyproline. An O-linked (Ara...) hydroxyproline glycan is attached at Pro-107.

The protein belongs to the CLV3/ESR signal peptide family. Interacts specifically with the leucine-rich repeat receptor-like protein kinase TDR, especially in the presence of SERK2. The O-glycosylation (arabinosylation) of the hydroxyproline Pro-107 enhances binding affinity of the CLE44p peptide for its receptor. Mostly expressed in flowers and leaves. Widely expressed along the vascular strands. In roots and hypocotyls, present in endodermal cells as well as cells in the phloem and the adjacent pericycle.

It is found in the secreted. It localises to the extracellular space. Functionally, extracellular signal peptide that regulates cell fate. May act with TDR as a ligand-receptor pair in a signal transduction pathway that represses tracheary element differentiation but promotes the formation of procambial cells adjacent to phloem cells in the veins. Regulates the transition of protophloem cells from proliferation to differentiation, thus impinging on postembryonic growth capacity of the root meristem; this signaling pathway requires CRN and CLV2. The polypeptide is CLAVATA3/ESR (CLE)-related protein 44 (Arabidopsis thaliana (Mouse-ear cress)).